The chain runs to 155 residues: MGFKTKFKRYFNLDDHVEEVERYVEEPEQRDERPALEKGRAPKEKQTAGMEQNQNIVSLQSVQKSAKMILLEPRSYDEAQDIADHLKRRKAVVINLLRIEQEQALRIVDFLSGTVYAIGGDIQKIGPGIFLCTPDNVEITGSISDWVTRQTDSTV.

A compositionally biased stretch (basic and acidic residues) spans 22–46 (RYVEEPEQRDERPALEKGRAPKEKQ). The interval 22–54 (RYVEEPEQRDERPALEKGRAPKEKQTAGMEQNQ) is disordered.

This sequence belongs to the SepF family. As to quaternary structure, homodimer. Interacts with FtsZ.

The protein localises to the cytoplasm. Cell division protein that is part of the divisome complex and is recruited early to the Z-ring. Probably stimulates Z-ring formation, perhaps through the cross-linking of FtsZ protofilaments. Its function overlaps with FtsA. The sequence is that of Cell division protein SepF from Shouchella clausii (strain KSM-K16) (Alkalihalobacillus clausii).